The primary structure comprises 415 residues: Histidine--tRNA ligase (415 aa).

It belongs to the class-II aminoacyl-tRNA synthetase family. Homodimer.

It is found in the cytoplasm. It catalyses the reaction tRNA(His) + L-histidine + ATP = L-histidyl-tRNA(His) + AMP + diphosphate + H(+). This is Histidine--tRNA ligase from Gluconobacter oxydans (strain 621H) (Gluconobacter suboxydans).